Reading from the N-terminus, the 133-residue chain is Small ribosomal subunit protein uS19 (133 aa).

This sequence belongs to the universal ribosomal protein uS19 family. In terms of assembly, part of the 30S ribosomal subunit.

In terms of biological role, protein S19 forms a complex with S13 that binds strongly to the 16S ribosomal RNA. The protein is Small ribosomal subunit protein uS19 of Thermococcus kodakarensis (strain ATCC BAA-918 / JCM 12380 / KOD1) (Pyrococcus kodakaraensis (strain KOD1)).